A 620-amino-acid chain; its full sequence is MLNKYPLWKYLLILAVLAVGFIYSAPNLYPDDPAVQISGASTALQVTQADVDRAAKALTDAGIAVKADSLSKKGGLIRLVKQDDQLPAKEVVRRTLGDDYVVALNLAQTTPEWLRKLGGSPMKLGLDLSGGVHFLLEVDMDKAVDARLKVYESEVKSLLRKERVRYRSLPIQDRAIQLGFTDSESLDKARSLIAKDFRDFEVVPEERNGLQVLRVALTQAKLAEIREYSIKQNLTTVRNRVNELGVSEPLVQRQGANRIVVELPGVQDTAEAKRILGKTANLEFRLAAEPDALKSATETFEFREPRRPPVPLERGVIITGDQVTDASASFDENGRPQVNIRLDGHGGELMNRATRNNVGRSMAVVFIEQKPVTRYTKQMVDGVEKEVAVPAFKEEKQIISLATIQSPLGNQFRITGLDGPGESSELALLLRAGGLAAPMYFAEERTIGPSLGADNIAKGIDASLWGMLFVSLFIIVIYRFFGVIATVALAFNMVMLVALMSILGATLTLPGIAGIVLTMGMAVDANVLIFSRIREELANGMSVQRAIHEGFNRAFTAILDANLTSLLVGGILYAMGTGPVKGFAVTMSLGIITSMFTAIMVTRAMVNLIFGGRDFKKLWI.

Helical transmembrane passes span 10 to 30, 464 to 484, 488 to 507, 511 to 533, 555 to 575, and 582 to 602; these read YLLI…NLYP, LWGM…FGVI, ALAF…GATL, GIAG…FSRI, FTAI…LYAM, and GFAV…IMVT.

Belongs to the SecD/SecF family. SecD subfamily. Forms a complex with SecF. Part of the essential Sec protein translocation apparatus which comprises SecA, SecYEG and auxiliary proteins SecDF-YajC and YidC.

It is found in the cell inner membrane. Its function is as follows. Part of the Sec protein translocase complex. Interacts with the SecYEG preprotein conducting channel. SecDF uses the proton motive force (PMF) to complete protein translocation after the ATP-dependent function of SecA. The polypeptide is Protein translocase subunit SecD (Pseudomonas aeruginosa (strain ATCC 15692 / DSM 22644 / CIP 104116 / JCM 14847 / LMG 12228 / 1C / PRS 101 / PAO1)).